Here is a 268-residue protein sequence, read N- to C-terminus: Zinc import ATP-binding protein ZnuC (268 aa).

The region spanning 16-231 (IQLKNINVVF…PTFMRLWGNQ (216 aa)) is the ABC transporter domain. Position 48–55 (48–55 (GPNGGGKS)) interacts with ATP.

The protein belongs to the ABC transporter superfamily. Zinc importer (TC 3.A.1.15.5) family. In terms of assembly, the complex is composed of two ATP-binding proteins (ZnuC), two transmembrane proteins (ZnuB) and a solute-binding protein (ZnuA).

Its subcellular location is the cell inner membrane. It catalyses the reaction Zn(2+)(out) + ATP(in) + H2O(in) = Zn(2+)(in) + ADP(in) + phosphate(in) + H(+)(in). Its function is as follows. Part of the ABC transporter complex ZnuABC involved in zinc import. Responsible for energy coupling to the transport system. The polypeptide is Zinc import ATP-binding protein ZnuC (Haemophilus influenzae (strain ATCC 51907 / DSM 11121 / KW20 / Rd)).